Reading from the N-terminus, the 883-residue chain is Valine--tRNA ligase (883 aa).

The 'HIGH' region motif lies at 46–56 (PNVTGKLHLGH). Positions 520–524 (KMSKS) match the 'KMSKS' region motif. Lys523 contributes to the ATP binding site. Residues 809-883 (LADLLNVEEE…RIDEMKKLVK (75 aa)) are a coiled coil.

The protein belongs to the class-I aminoacyl-tRNA synthetase family. ValS type 1 subfamily. Monomer.

Its subcellular location is the cytoplasm. The enzyme catalyses tRNA(Val) + L-valine + ATP = L-valyl-tRNA(Val) + AMP + diphosphate. Catalyzes the attachment of valine to tRNA(Val). As ValRS can inadvertently accommodate and process structurally similar amino acids such as threonine, to avoid such errors, it has a 'posttransfer' editing activity that hydrolyzes mischarged Thr-tRNA(Val) in a tRNA-dependent manner. This Streptococcus pneumoniae serotype 4 (strain ATCC BAA-334 / TIGR4) protein is Valine--tRNA ligase.